The chain runs to 356 residues: Histidinol-phosphate aminotransferase (356 aa).

At Lys-214 the chain carries N6-(pyridoxal phosphate)lysine.

This sequence belongs to the class-II pyridoxal-phosphate-dependent aminotransferase family. Histidinol-phosphate aminotransferase subfamily. As to quaternary structure, homodimer. Requires pyridoxal 5'-phosphate as cofactor.

It catalyses the reaction L-histidinol phosphate + 2-oxoglutarate = 3-(imidazol-4-yl)-2-oxopropyl phosphate + L-glutamate. It functions in the pathway amino-acid biosynthesis; L-histidine biosynthesis; L-histidine from 5-phospho-alpha-D-ribose 1-diphosphate: step 7/9. The polypeptide is Histidinol-phosphate aminotransferase (Escherichia coli O7:K1 (strain IAI39 / ExPEC)).